A 1506-amino-acid chain; its full sequence is Transient receptor potential cation channel subfamily M member 2 (1506 aa).

Positions 1-11 (MESLDRRRTGS) are enriched in basic and acidic residues. The interval 1–22 (MESLDRRRTGSEQEEGFGVQSR) is disordered. The Cytoplasmic segment spans residues 1–750 (MESLDRRRTG…WWGQLCVDNG (750 aa)). 5 residues coordinate ADP-D-ribose: Thr173, Asn178, Arg301, Gly332, and Thr335. Thr738 bears the Phosphothreonine mark. The stretch at 751–767 (LWRIILCMLAFPLLFTG) is an intramembrane region. Residues 768–792 (FISFREKRLQALCRPARVRAFFNAP) lie on the Cytoplasmic side of the membrane. A helical transmembrane segment spans residues 793–813 (VVIFHMNILSYFAFLCLFAYV). The Extracellular portion of the chain corresponds to 814–824 (LMVDFQPSPSW). A helical membrane pass occupies residues 825–845 (CEYLIYLWLFSLVCEETRQLF). Residues Glu840 and Gln843 each contribute to the Ca(2+) site. Over 846–864 (YDPDGCGLMKMASLYFSDF) the chain is Cytoplasmic. Residues 865–885 (WNKLDVGAILLFIVGLTCRLI) form a helical membrane-spanning segment. A Ca(2+)-binding site is contributed by Asn866. Topologically, residues 886 to 893 (PATLYPGR) are extracellular. Residues 894 to 914 (IILSLDFIMFCLRLMHIFTIS) traverse the membrane as a helical segment. Residues 915–926 (KTLGPKIIIVKR) lie on the Cytoplasmic side of the membrane. A helical membrane pass occupies residues 927–947 (MMKDVFFFLFLLAVWVVSFGV). Residues 948 to 967 (AKQAILIHNESRVDWIFRGV) lie on the Extracellular side of the membrane. The pore-forming intramembrane region spans 968–982 (VYHSYLTIFGQIPTY). A Selectivity filter motif is present at residues 976–979 (FGQI). At 983-1019 (IDGVNFSMDQCSPNGTDPYKPKCPESDWTGQAPAFPE) the chain is on the extracellular side. Cys993 and Cys1005 are oxidised to a cystine. Residues 1020–1041 (WLTVTLLCLYLLFANILLLNLL) traverse the membrane as a helical segment. Over 1042-1076 (IAMFNYTFQEVQEHTDQIWKFQRHDLIEEYHGRPP) the chain is Cytoplasmic. Glu1070 contributes to the Ca(2+) binding site. The stretch at 1077 to 1095 (APPPLILLSHLQLLIKRIV) is an intramembrane region. Over 1096 to 1506 (LKIPAKRHKQ…KVASLFGAHF (411 aa)) the chain is Cytoplasmic. Residues 1350–1501 (RWKRNQGGAI…KTILQKVASL (152 aa)) form the Nudix hydrolase domain. Ser1378 is a binding site for ADP-D-ribose. The Nudix box motif lies at 1386–1407 (GSREPGEMLPRKLKRVLRQEFW). 4 residues coordinate ADP-D-ribose: Asp1427, Arg1429, Tyr1488, and Asn1490.

It belongs to the transient receptor (TC 1.A.4) family. LTrpC subfamily. TRPM2 sub-subfamily. Homotetramer. Post-translationally, protein kinase C (PKC)-mediated phosphorylation of TRPM2 at Thr-738 counteracts the effect of cytosolic Ca(2+) and elevates the temperature threshold. Detected in the preoptic area of the hypothalamus, a brain area involved in body temperature control. Detected in beta-cells in pancreas islets (at protein level). Detected in brain cortex, striatum, hippocampus CA1, CA2 and CA3 layers, and in the Purkinje cell layer in cerebellum. Widely expressed, with highest levels in lung, spleen, eye and brain. Detected in dendritic cells and in polymorphonuclear neutrophils.

It is found in the cell membrane. The protein resides in the perikaryon. Its subcellular location is the cell projection. It localises to the cytoplasmic vesicle. The protein localises to the lysosome. The enzyme catalyses Ca(2+)(in) = Ca(2+)(out). It catalyses the reaction Na(+)(in) = Na(+)(out). Activated by intracellular ADP-ribose, beta-NAD (NAD(+)) and similar compounds, and by oxidative stress caused by reactive oxygen or nitrogen species. Ca(2+) and PI(4,5)P2 are required for channel opening by ADP-ribose. Activated by moderate heat (35 to 40 degrees Celsius). Activation by ADP-ribose and beta-NAD is strongly increased by moderate heat (35 to 40 degrees Celsius). Likewise, reactive oxygen species lower the threshold for activation by moderate heat (37 degrees Celsius). Inactivated by exposure to extracellular pH between 4.0 and 6.5; irreversibly inactivated when open channels are exposed to extracellular pH between 4.0 and 6.5, while pre-exposure of closed channels to extracellular pH 5.5 gives rise to currents that rapidly inactivate, but protects against irreversible inactivation. Inactivated by intracellular ATP. Activated by arachidonic acid. Inhibited by 2-aminoethyl diphenylborinate (2-APB). Nonselective, voltage-independent cation channel that mediates Na(+) and Ca(2+) influx, leading to increased cytoplasmic Ca(2+) levels. Functions as a ligand-gated ion channel, gated by intracellular adenosine diphosphate ribose (ADP-ribose), Ca(2+), warm temperature, and oxidative stress. The precise physiological activators are under debate; the true, physiological activators may be ADP-ribose and ADP-ribose-2'-phosphate. Binding of ADP-ribose to the cytoplasmic Nudix domain causes a conformation change; the channel is primed but still requires Ca(2+) binding to trigger channel opening. Extracellular Ca(2+) passes through the channel and increases channel activity. Also contributes to Ca(2+) release from intracellular stores in response to ADP-ribose. Plays a role in numerous processes that involve signaling via intracellular Ca(2+) levels. Besides, mediates the release of lysosomal Zn(2+) stores in response to reactive oxygen species, leading to increased cytosolic Zn(2+) levels. Plays a role in mediating behavorial and physiological responses to moderate heat and thereby contributes to body temperature homeostasis. Plays a role in insulin secretion, a process that requires increased cytoplasmic Ca(2+) levels. Required for normal IFNG and cytokine secretion and normal innate immune immunity in response to bacterial infection. Required for normal phagocytosis and cytokine release by macrophages exposed to zymosan (in vitro). Plays a role in dendritic cell differentiation and maturation, and in dendritic cell chemotaxis via its role in regulating cytoplasmic Ca(2+) levels. Plays a role in the regulation of the reorganization of the actin cytoskeleton and filopodia formation in response to reactive oxygen species via its function in increasing cytoplasmic Ca(2+) and Zn(2+) levels. Confers susceptibility to cell death following oxidative stress. This is Transient receptor potential cation channel subfamily M member 2 (Trpm2) from Mus musculus (Mouse).